The following is a 172-amino-acid chain: Large ribosomal subunit protein uL10 (172 aa).

This sequence belongs to the universal ribosomal protein uL10 family. In terms of assembly, part of the ribosomal stalk of the 50S ribosomal subunit. The N-terminus interacts with L11 and the large rRNA to form the base of the stalk. The C-terminus forms an elongated spine to which L12 dimers bind in a sequential fashion forming a multimeric L10(L12)X complex.

In terms of biological role, forms part of the ribosomal stalk, playing a central role in the interaction of the ribosome with GTP-bound translation factors. This is Large ribosomal subunit protein uL10 from Francisella tularensis subsp. mediasiatica (strain FSC147).